The primary structure comprises 91 residues: MALLDFFLSRKKSTANIAKERLQIIVAERRRGDCEPHYLPQLKRDILEVICKYVKIDPEMLSVKLDQKDDDISILELNVTLPESEAEEVHK.

The protein belongs to the MinE family.

Prevents the cell division inhibition by proteins MinC and MinD at internal division sites while permitting inhibition at polar sites. This ensures cell division at the proper site by restricting the formation of a division septum at the midpoint of the long axis of the cell. In Erwinia tasmaniensis (strain DSM 17950 / CFBP 7177 / CIP 109463 / NCPPB 4357 / Et1/99), this protein is Cell division topological specificity factor.